The primary structure comprises 1425 residues: Protein NAP1 (1425 aa).

3 stretches are compositionally biased toward polar residues: residues 1-20, 1299-1312, and 1320-1329; these read MANSRQYYPSQDESMSPTSV, TPLSTASPYHSPSV, and SMKNSTTPQR. 2 disordered regions span residues 1–24 and 1299–1425; these read MANSRQYYPSQDESMSPTSVRSRE and TPLS…KQHN. Over residues 1362–1405 the composition is skewed to low complexity; it reads SETGNSRNNENNNNNKQRGSSRRSGPLDYSSSHKGGSGSNSTGP.

The protein belongs to the HEM-1/HEM-2 family. Binds PIR. Expressed in roots, root hairs, hypocotyls, cotyledons, stems, leaves, trichomes, and flowers.

In terms of biological role, involved in regulation of actin and microtubule organization. Part of a WAVE complex that activates the Arp2/3 complex. The chain is Protein NAP1 (NAP1) from Arabidopsis thaliana (Mouse-ear cress).